We begin with the raw amino-acid sequence, 110 residues long: Endoribonuclease SymE (110 aa).

One can recognise a SpoVT-AbrB domain in the interval 29 to 74; that stretch reads SRYPDYTRIPALTMKGQWLEAAGFATGTEVDVRVMNGCIVLTAQQP.

It belongs to the SymE family.

It is found in the cytoplasm. Its function is as follows. Involved in the degradation and recycling of damaged RNA. It is itself a target for degradation by the ATP-dependent protease Lon. The chain is Endoribonuclease SymE from Salmonella heidelberg (strain SL476).